The chain runs to 215 residues: Small ribosomal subunit protein uS3c (215 aa).

The 74-residue stretch at 43–116 (IKNYIKKNMK…KLNMAITRIA (74 aa)) folds into the KH type-2 domain.

Belongs to the universal ribosomal protein uS3 family. Part of the 30S ribosomal subunit.

Its subcellular location is the plastid. The protein resides in the chloroplast. The sequence is that of Small ribosomal subunit protein uS3c (rps3) from Morus indica (Mulberry).